The following is a 247-amino-acid chain: uncharacterized protein (247 aa).

3 residues coordinate NADP(+): leucine 11, asparagine 85, and lysine 119. The Proton donor role is filled by serine 136. Tyrosine 150, lysine 154, valine 181, and threonine 183 together coordinate NADP(+). Tyrosine 150 (proton acceptor) is an active-site residue. The active-site Lowers pKa of active site Tyr is lysine 154.

It belongs to the short-chain dehydrogenases/reductases (SDR) family.

This is an uncharacterized protein from Schizosaccharomyces pombe (strain 972 / ATCC 24843) (Fission yeast).